Here is a 210-residue protein sequence, read N- to C-terminus: 2-hydroxy-3-keto-5-methylthiopentenyl-1-phosphate phosphatase (210 aa).

Belongs to the HAD-like hydrolase superfamily. MtnX family.

The enzyme catalyses 2-hydroxy-5-methylsulfanyl-3-oxopent-1-enyl phosphate + H2O = 1,2-dihydroxy-5-(methylsulfanyl)pent-1-en-3-one + phosphate. It functions in the pathway amino-acid biosynthesis; L-methionine biosynthesis via salvage pathway; L-methionine from S-methyl-5-thio-alpha-D-ribose 1-phosphate: step 4/6. Dephosphorylates 2-hydroxy-3-keto-5-methylthiopentenyl-1-phosphate (HK-MTPenyl-1-P) yielding 1,2-dihydroxy-3-keto-5-methylthiopentene (DHK-MTPene). This chain is 2-hydroxy-3-keto-5-methylthiopentenyl-1-phosphate phosphatase, found in Microcystis aeruginosa.